We begin with the raw amino-acid sequence, 644 residues long: Exoribonuclease 2 (644 aa).

Residues 189 to 516 form the RNB domain; the sequence is REDLTALDFV…NHRLLKAVIK (328 aa). An S1 motif domain is found at 561 to 643; it reads DTRFAAEIVD…ETRSIIARPV (83 aa).

The protein belongs to the RNR ribonuclease family. RNase II subfamily.

The protein localises to the cytoplasm. The catalysed reaction is Exonucleolytic cleavage in the 3'- to 5'-direction to yield nucleoside 5'-phosphates.. Its function is as follows. Involved in mRNA degradation. Hydrolyzes single-stranded polyribonucleotides processively in the 3' to 5' direction. In Escherichia coli O8 (strain IAI1), this protein is Exoribonuclease 2.